Reading from the N-terminus, the 381-residue chain is 5-cytosine rRNA methyltransferase NSUN4 (381 aa).

The transit peptide at 1–25 (MAAPVLRCVRKLLKLVDFTPVPRRY) directs the protein to the mitochondrion. Residues Gly-182, Gly-183, Lys-184, and Asp-201 each coordinate S-adenosyl-L-methionine. The residue at position 203 (Ser-203) is a Phosphoserine. Arg-206, Asp-234, Gly-235, and Asp-252 together coordinate S-adenosyl-L-methionine. Catalysis depends on Cys-307, which acts as the Nucleophile.

This sequence belongs to the class I-like SAM-binding methyltransferase superfamily. RsmB/NOP family. In terms of assembly, heterodimer with MTERFD2/MTERF4; this interaction seems to be required for NSUN4 recruitment to the mitochondrial large ribosomal subunit.

It localises to the mitochondrion. It catalyses the reaction a cytidine in rRNA + S-adenosyl-L-methionine = a 5-methylcytidine in rRNA + S-adenosyl-L-homocysteine + H(+). The catalysed reaction is a cytidine in mRNA + S-adenosyl-L-methionine = a 5-methylcytidine in mRNA + S-adenosyl-L-homocysteine + H(+). Mitochondrial RNA cytosine C(5)-methyltransferase that methylates cytosine to 5-methylcytosine (m5C) in various RNAs, such as rRNAs, mRNAs and some long non-coding RNAs (lncRNAs). Involved in mitochondrial ribosome small subunit (SSU) maturation by catalyzing methylation of mitochondrial 12S rRNA; the function is independent of MTERFD2/MTERF4 and assembled mitochondrial ribosome large subunit (LSU). Targeted to LSU by MTERFD2/MTERF4 and probably is involved in a final step in ribosome biogenesis to ensure that SSU and LSU are assembled. In vitro can methylate 16S rRNA of the LSU; the methylation is enhanced by MTERFD/MTERF4. Also acts as a regulator of innate immunity by marking double-stranded mitochondrial RNAs(mt-dsRNAs) generated in response to stress: catalyzes m5C modification on mitochondrial RNAs, such as a mRNAs and lncRNAs, with a preference for the termini of light-strand lncRNAs, promoting their degradation and cytosolic release. Modified light-strand lncRNAs are then recognized by C1QBP reader and recruited to the mitochondrial degradosome complex, which promotes their degradation. This Mus musculus (Mouse) protein is 5-cytosine rRNA methyltransferase NSUN4.